The chain runs to 91 residues: Em-like protein (91 aa).

Composition is skewed to basic and acidic residues over residues 1–18 (MEQQQDRRELDAKAREGE) and 31–51 (DAQERLAEGRSRGGQTRKEQI). Residues 1–91 (MEQQQDRREL…PIDESKYRHP (91 aa)) form a disordered region. Over residues 62–73 (KGGLSSAGGPGG) the composition is skewed to gly residues. The segment covering 75–91 (RASEEGRPIDESKYRHP) has biased composition (basic and acidic residues).

This sequence belongs to the small hydrophilic plant seed protein family.

The polypeptide is Em-like protein (Picea glauca (White spruce)).